A 160-amino-acid polypeptide reads, in one-letter code: Phosphopantetheine adenylyltransferase (160 aa).

Residue Ser9 coordinates substrate. ATP is bound by residues 9 to 10 (SL) and His17. 3 residues coordinate substrate: Lys41, Leu74, and Lys88. Residues 89-91 (GIR), Glu99, and 123-129 (YLHLSST) contribute to the ATP site.

It belongs to the bacterial CoaD family. In terms of assembly, homohexamer. Requires Mg(2+) as cofactor.

The protein localises to the cytoplasm. The catalysed reaction is (R)-4'-phosphopantetheine + ATP + H(+) = 3'-dephospho-CoA + diphosphate. The protein operates within cofactor biosynthesis; coenzyme A biosynthesis; CoA from (R)-pantothenate: step 4/5. Its function is as follows. Reversibly transfers an adenylyl group from ATP to 4'-phosphopantetheine, yielding dephospho-CoA (dPCoA) and pyrophosphate. The sequence is that of Phosphopantetheine adenylyltransferase from Renibacterium salmoninarum (strain ATCC 33209 / DSM 20767 / JCM 11484 / NBRC 15589 / NCIMB 2235).